The chain runs to 906 residues: Protein translocase subunit SecA (906 aa).

Residues Q86, 104–108 (GEGKT), and D499 contribute to the ATP site. Residues 834–847 (KLQKNMRESREDPA) are compositionally biased toward basic and acidic residues. The tract at residues 834 to 887 (KLQKNMRESREDPAFSKYNAGSSLETDLKPVVSRVDPKDRNPDDPTSWGRVSRN) is disordered. C890, C892, C901, and H902 together coordinate Zn(2+).

This sequence belongs to the SecA family. Monomer and homodimer. Part of the essential Sec protein translocation apparatus which comprises SecA, SecYEG and auxiliary proteins SecDF-YajC and YidC. Zn(2+) serves as cofactor.

The protein resides in the cell inner membrane. It localises to the cytoplasm. It catalyses the reaction ATP + H2O + cellular proteinSide 1 = ADP + phosphate + cellular proteinSide 2.. Its function is as follows. Part of the Sec protein translocase complex. Interacts with the SecYEG preprotein conducting channel. Has a central role in coupling the hydrolysis of ATP to the transfer of proteins into and across the cell membrane, serving both as a receptor for the preprotein-SecB complex and as an ATP-driven molecular motor driving the stepwise translocation of polypeptide chains across the membrane. In Rickettsia felis (strain ATCC VR-1525 / URRWXCal2) (Rickettsia azadi), this protein is Protein translocase subunit SecA.